Reading from the N-terminus, the 329-residue chain is Intradiol ring-cleavage dioxygenase hqdA (329 aa).

Positions 167, 201, 225, and 227 each coordinate Fe cation.

This sequence belongs to the intradiol ring-cleavage dioxygenase family. In terms of assembly, homodimer. The cofactor is Fe(3+).

The catalysed reaction is catechol + O2 = cis,cis-muconate + 2 H(+). It catalyses the reaction benzene-1,2,4-triol + O2 = maleylacetate + 2 H(+). Functionally, intradiol ring-cleavage dioxygenase involved in an alternative pathway to the protocatechuic acid pathway since it is active on hydroxyquinol and catechol but not on protocatechuic acid. In Aspergillus niger (strain ATCC MYA-4892 / CBS 513.88 / FGSC A1513), this protein is Intradiol ring-cleavage dioxygenase hqdA.